A 423-amino-acid polypeptide reads, in one-letter code: 26S proteasome regulatory subunit 6A-A (423 aa).

211-218 contributes to the ATP binding site; that stretch reads GPPGTGKT.

Belongs to the AAA ATPase family. In terms of assembly, may form a heterodimer with a related family member.

The protein localises to the cytoplasm. The protein resides in the nucleus. Its function is as follows. The 26S proteasome is involved in the ATP-dependent degradation of ubiquitinated proteins. The regulatory (or ATPase) complex confers ATP dependency and substrate specificity to the 26S complex. This chain is 26S proteasome regulatory subunit 6A-A, found in Xenopus laevis (African clawed frog).